We begin with the raw amino-acid sequence, 341 residues long: S-adenosylmethionine:tRNA ribosyltransferase-isomerase (341 aa).

Belongs to the QueA family. In terms of assembly, monomer.

The protein resides in the cytoplasm. The enzyme catalyses 7-aminomethyl-7-carbaguanosine(34) in tRNA + S-adenosyl-L-methionine = epoxyqueuosine(34) in tRNA + adenine + L-methionine + 2 H(+). It participates in tRNA modification; tRNA-queuosine biosynthesis. In terms of biological role, transfers and isomerizes the ribose moiety from AdoMet to the 7-aminomethyl group of 7-deazaguanine (preQ1-tRNA) to give epoxyqueuosine (oQ-tRNA). The chain is S-adenosylmethionine:tRNA ribosyltransferase-isomerase from Pelodictyon phaeoclathratiforme (strain DSM 5477 / BU-1).